The chain runs to 424 residues: Enolase (424 aa).

Glutamine 162 is a binding site for (2R)-2-phosphoglycerate. Residue glutamate 204 is the Proton donor of the active site. Mg(2+) is bound by residues aspartate 241, glutamate 284, and aspartate 311. Residues lysine 336, arginine 365, serine 366, and lysine 387 each contribute to the (2R)-2-phosphoglycerate site. The active-site Proton acceptor is lysine 336.

It belongs to the enolase family. The cofactor is Mg(2+).

It is found in the cytoplasm. The protein resides in the secreted. It localises to the cell surface. The catalysed reaction is (2R)-2-phosphoglycerate = phosphoenolpyruvate + H2O. Its pathway is carbohydrate degradation; glycolysis; pyruvate from D-glyceraldehyde 3-phosphate: step 4/5. Catalyzes the reversible conversion of 2-phosphoglycerate (2-PG) into phosphoenolpyruvate (PEP). It is essential for the degradation of carbohydrates via glycolysis. This is Enolase from Rhizobium johnstonii (strain DSM 114642 / LMG 32736 / 3841) (Rhizobium leguminosarum bv. viciae).